A 156-amino-acid chain; its full sequence is Small ribosomal subunit protein uS7 (156 aa).

This sequence belongs to the universal ribosomal protein uS7 family. In terms of assembly, part of the 30S ribosomal subunit. Contacts proteins S9 and S11.

Its function is as follows. One of the primary rRNA binding proteins, it binds directly to 16S rRNA where it nucleates assembly of the head domain of the 30S subunit. Is located at the subunit interface close to the decoding center, probably blocks exit of the E-site tRNA. This Coprothermobacter proteolyticus (strain ATCC 35245 / DSM 5265 / OCM 4 / BT) protein is Small ribosomal subunit protein uS7.